The sequence spans 505 residues: Deoxyguanosinetriphosphate triphosphohydrolase (505 aa).

Residues 66–273 enclose the HD domain; the sequence is RLTHSMEVQQ…MEAADDISYC (208 aa).

Belongs to the dGTPase family. Type 1 subfamily. In terms of assembly, homotetramer. Requires Mg(2+) as cofactor.

It carries out the reaction dGTP + H2O = 2'-deoxyguanosine + triphosphate + H(+). Functionally, dGTPase preferentially hydrolyzes dGTP over the other canonical NTPs. This chain is Deoxyguanosinetriphosphate triphosphohydrolase, found in Escherichia coli O157:H7.